We begin with the raw amino-acid sequence, 163 residues long: Phosphopantetheine adenylyltransferase (163 aa).

Substrate is bound at residue serine 11. Residues 11 to 12 (SF) and histidine 19 each bind ATP. Substrate contacts are provided by lysine 43, alanine 76, and arginine 90. Residues 91–93 (GLR), glutamate 101, and 126–132 (WQALSSS) each bind ATP.

Belongs to the bacterial CoaD family. In terms of assembly, homohexamer. Mg(2+) serves as cofactor.

Its subcellular location is the cytoplasm. It carries out the reaction (R)-4'-phosphopantetheine + ATP + H(+) = 3'-dephospho-CoA + diphosphate. The protein operates within cofactor biosynthesis; coenzyme A biosynthesis; CoA from (R)-pantothenate: step 4/5. Its function is as follows. Reversibly transfers an adenylyl group from ATP to 4'-phosphopantetheine, yielding dephospho-CoA (dPCoA) and pyrophosphate. The chain is Phosphopantetheine adenylyltransferase from Streptococcus pyogenes serotype M6 (strain ATCC BAA-946 / MGAS10394).